The chain runs to 327 residues: Phospho-N-acetylmuramoyl-pentapeptide-transferase (327 aa).

Transmembrane regions (helical) follow at residues 3–23, 51–71, 75–95, 115–135, 140–160, 172–192, 197–217, 223–243, 248–268, and 306–326; these read IALI…PAFI, TMGG…IGLF, LSNG…VGFL, LFLQ…HGAG, IFTV…FWLI, IDGL…VIAV, FDIL…FVFN, IFMG…ISIS, WTLL…MMQV, and VDFF…AILY.

This sequence belongs to the glycosyltransferase 4 family. MraY subfamily. Requires Mg(2+) as cofactor.

The protein resides in the cell membrane. The catalysed reaction is UDP-N-acetyl-alpha-D-muramoyl-L-alanyl-gamma-D-glutamyl-L-lysyl-D-alanyl-D-alanine + di-trans,octa-cis-undecaprenyl phosphate = Mur2Ac(oyl-L-Ala-gamma-D-Glu-L-Lys-D-Ala-D-Ala)-di-trans,octa-cis-undecaprenyl diphosphate + UMP. The protein operates within cell wall biogenesis; peptidoglycan biosynthesis. Its function is as follows. Catalyzes the initial step of the lipid cycle reactions in the biosynthesis of the cell wall peptidoglycan: transfers peptidoglycan precursor phospho-MurNAc-pentapeptide from UDP-MurNAc-pentapeptide onto the lipid carrier undecaprenyl phosphate, yielding undecaprenyl-pyrophosphoryl-MurNAc-pentapeptide, known as lipid I. The polypeptide is Phospho-N-acetylmuramoyl-pentapeptide-transferase (Streptococcus sanguinis (strain SK36)).